We begin with the raw amino-acid sequence, 167 residues long: Leptin (167 aa).

Positions 1-21 (MRCGPLYQFLWLWPYLSYVEA) are cleaved as a signal peptide. An intrachain disulfide couples C117 to C167.

The protein belongs to the leptin family.

The protein resides in the secreted. Its function is as follows. Key player in the regulation of energy balance and body weight control. Once released into the circulation, has central and peripheral effects by binding LEPR, found in many tissues, which results in the activation of several major signaling pathways. In the hypothalamus, acts as an appetite-regulating factor that induces a decrease in food intake and an increase in energy consumption by inducing anorexinogenic factors and suppressing orexigenic neuropeptides, also regulates bone mass and secretion of hypothalamo-pituitary-adrenal hormones. In the periphery, increases basal metabolism, influences reproductive function, regulates pancreatic beta-cell function and insulin secretion, is pro-angiogenic for endothelial cell and affects innate and adaptive immunity. In the arcuate nucleus of the hypothalamus, activates by depolarization POMC neurons inducing FOS and SOCS3 expression to release anorexigenic peptides and inhibits by hyperpolarization NPY neurons inducing SOCS3 with a consequent reduction on release of orexigenic peptides. In addition to its known satiety inducing effect, has a modulatory role in nutrient absorption. In the intestine, reduces glucose absorption by enterocytes by activating PKC and leading to a sequential activation of p38, PI3K and ERK signaling pathways which exerts an inhibitory effect on glucose absorption. Acts as a growth factor on certain tissues, through the activation of different signaling pathways increases expression of genes involved in cell cycle regulation such as CCND1, via JAK2-STAT3 pathway, or VEGFA, via MAPK1/3 and PI3K-AKT1 pathways. May also play an apoptotic role via JAK2-STAT3 pathway and up-regulation of BIRC5 expression. Pro-angiogenic, has mitogenic activity on vascular endothelial cells and plays a role in matrix remodeling by regulating the expression of matrix metalloproteinases (MMPs) and tissue inhibitors of metalloproteinases (TIMPs). In innate immunity, modulates the activity and function of neutrophils by increasing chemotaxis and the secretion of oxygen radicals. Increases phagocytosis by macrophages and enhances secretion of pro-inflammatory mediators. Increases cytotoxic ability of NK cells. Plays a pro-inflammatory role, in synergy with IL1B, by inducing NOS2 which promotes the production of IL6, IL8 and Prostaglandin E2, through a signaling pathway that involves JAK2, PI3K, MAP2K1/MEK1 and MAPK14/p38. In adaptive immunity, promotes the switch of memory T-cells towards T helper-1 cell immune responses. Increases CD4(+)CD25(-) T-cell proliferation and reduces autophagy during TCR (T-cell receptor) stimulation, through MTOR signaling pathway activation and BCL2 up-regulation. This Bubalus bubalis (Domestic water buffalo) protein is Leptin (LEP).